The chain runs to 226 residues: Low-molecular weight cobalt-containing nitrile hydratase subunit beta (226 aa).

The interval 1-22 (MDGIHDLGGRAGLGPIKPESDE) is disordered.

The protein belongs to the nitrile hydratase subunit beta family. In terms of assembly, heterodimer of an alpha and a beta chain.

It carries out the reaction an aliphatic primary amide = an aliphatic nitrile + H2O. In terms of biological role, NHase catalyzes the hydration of various nitrile compounds to the corresponding amides. The chain is Low-molecular weight cobalt-containing nitrile hydratase subunit beta from Rhodococcus rhodochrous.